The primary structure comprises 802 residues: Mitogen-activated protein kinase kinase kinase 20 (802 aa).

S2 carries the post-translational modification N-acetylserine. Residues S2, S3, and S7 each carry the phosphoserine modification. One can recognise a Protein kinase domain in the interval 16–277; that stretch reads LQFFENCGGG…NLPDQCNSFL (262 aa). ATP contacts are provided by residues 22-30 and K45; that span reads CGGGSFGSV. D133 functions as the Proton acceptor in the catalytic mechanism. Phosphothreonine; by autocatalysis is present on T161. The residue at position 165 (S165) is a Phosphoserine; by autocatalysis. Phosphoserine occurs at positions 275 and 302. The tract at residues 287 to 308 is leucine-zipper; that stretch reads IEATLERLKKLERDLSFKEQEL. One can recognise an SAM domain in the interval 339 to 410; that stretch reads WTEDDVYFWV…KSAIEKLTHD (72 aa). Residues K434, Q453, and S567 each carry the phosphoserine modification. The residue at position 586 (T586) is a Phosphothreonine. Phosphoserine occurs at positions 587, 593, and 599. Polar residues predominate over residues 624-642; the sequence is YQQITPSINPSRSSSPTQY. Residues 624-802 form a disordered region; sequence YQQITPSINP…RGNYRGRRNF (179 aa). Position 628 is a phosphothreonine (T628). Phosphoserine is present on residues S634, S638, S649, S650, and S661. The span at 643–666 shows a compositional bias: low complexity; that stretch reads GLSRNFSSLNLSSRDSGFSSLNDS. Residues 667-678 show a composition bias toward basic and acidic residues; it reads SSERGRYSDRSR. Positions 670 to 713 are sensing domain (S); the sequence is RGRYSDRSRNKYYRGSVSLNSSPKGRYGGKSQHSTPSRERYSGK. A phosphoserine mark is found at S685, S720, S727, and S733. Basic and acidic residues predominate over residues 728 to 741; it reads PDFKRSPNDHDRRV. T744 bears the Phosphothreonine mark. Positions 776–802 are C-terminal domain (CTD); the sequence is RKKTHRQLSAKTSKERTRGNYRGRRNF.

The protein belongs to the protein kinase superfamily. STE Ser/Thr protein kinase family. MAP kinase kinase kinase subfamily. In terms of assembly, homodimer. Interacts with ZNF33A. Component of a signaling complex containing at least AKAP13, PKN1, MAPK14, MAP3K20 and MAP2K3. Within this complex, AKAP13 interacts directly with PKN1, which in turn recruits MAPK14, MAP2K3 and MAP3K20. Interacts with EIF2AK4/GCN2; promoting EIF2AK4/GCN2 kinase activity. Interacts with isoform ZAKbeta. As to quaternary structure, interacts with isoform ZAKalpha. The cofactor is Mg(2+). Post-translationally, activated by phosphorylation by PKN1, followed by autophosphorylation on Thr-161 and Ser-165. Autophosphorylation in response to ribotoxic stress promotes dissociation from colliding ribosomes and activation.

The protein resides in the cytoplasm. Its subcellular location is the nucleus. The enzyme catalyses L-seryl-[protein] + ATP = O-phospho-L-seryl-[protein] + ADP + H(+). It carries out the reaction L-threonyl-[protein] + ATP = O-phospho-L-threonyl-[protein] + ADP + H(+). Activated in response to stress, such as ribosomal stress, osmotic shock and ionizing radiation. Activated by phosphorylation by PKN1, followed by autophosphorylation on Thr-161 and Ser-165. Stress-activated component of a protein kinase signal transduction cascade that promotes programmed cell death in response to various stress, such as ribosomal stress, osmotic shock and ionizing radiation. Acts by catalyzing phosphorylation of MAP kinase kinases, leading to activation of the JNK (MAPK8/JNK1, MAPK9/JNK2 and/or MAPK10/JNK3) and MAP kinase p38 (MAPK11, MAPK12, MAPK13 and/or MAPK14) pathways. Activates JNK through phosphorylation of MAP2K4/MKK4 and MAP2K7/MKK7, and MAP kinase p38 gamma (MAPK12) via phosphorylation of MAP2K3/MKK3 and MAP2K6/MKK6. Involved in stress associated with adrenergic stimulation: contributes to cardiac decompensation during periods of acute cardiac stress. May be involved in regulation of S and G2 cell cycle checkpoint by mediating phosphorylation of CHEK2. In terms of biological role, key component of the stress-activated protein kinase signaling cascade in response to ribotoxic stress or UV-B irradiation. Acts as the proximal sensor of ribosome collisions during the ribotoxic stress response (RSR). Directly binds to the ribosome by inserting its flexible C-terminus into the ribosomal intersubunit space, thereby acting as a sentinel for colliding ribosomes. Upon ribosome collisions, activates either the stress-activated protein kinase signal transduction cascade or the integrated stress response (ISR), leading to programmed cell death or cell survival, respectively. Dangerous levels of ribosome collisions trigger the autophosphorylation and activation of MAP3K20, which dissociates from colliding ribosomes and phosphorylates MAP kinase kinases, leading to activation of the JNK and MAP kinase p38 pathways that promote programmed cell death. Less dangerous levels of ribosome collisions trigger the integrated stress response (ISR): MAP3K20 activates EIF2AK4/GCN2 independently of its protein-kinase activity, promoting EIF2AK4/GCN2-mediated phosphorylation of EIF2S1/eIF-2-alpha. Also acts as a histone kinase by phosphorylating histone H3 at 'Ser-28' (H3S28ph). Its function is as follows. Isoform that lacks the C-terminal region that mediates ribosome-binding: does not act as a sensor of ribosome collisions in response to ribotoxic stress. May act as an antagonist of isoform ZAKalpha: interacts with isoform ZAKalpha, leading to decrease the expression of isoform ZAKalpha. This Mus musculus (Mouse) protein is Mitogen-activated protein kinase kinase kinase 20.